The chain runs to 1117 residues: Sodium-driven chloride bicarbonate exchanger (1117 aa).

Positions 1–14 are enriched in polar residues; sequence MQSGTCESFQSLSH. 4 disordered regions span residues 1–26, 57–94, 244–312, and 456–475; these read MQSG…VDRG, GRKS…FDTP, KQSE…PHQQ, and NGTA…GPEL. At 1-508 the chain is on the cytoplasmic side; the sequence is MQSGTCESFQ…DFTDALSLQC (508 aa). Basic and acidic residues predominate over residues 15–26; the sequence is QRNDEEAVVDRG. Positions 58-75 are enriched in basic residues; that stretch reads RKSHRRHRHRGHKHRKRD. Residues 76 to 89 show a composition bias toward basic and acidic residues; that stretch reads RERDSGLEDGRESP. Residue Ser-88 is modified to Phosphoserine. Thr-93 is modified (phosphothreonine). Residues 247–263 are compositionally biased toward polar residues; the sequence is EPNSMDKNAGQVVSPQS. Phosphoserine is present on Ser-275. A helical membrane pass occupies residues 509 to 529; it reads LASFLFLYCACMSPVITFGGL. Residues 530–537 are Extracellular-facing; sequence LGEATEGR. A helical transmembrane segment spans residues 538-558; it reads ISAIESLFGASMTGIAYSLFG. The Cytoplasmic segment spans residues 559-561; the sequence is GQP. A helical transmembrane segment spans residues 562 to 582; sequence LTILGSTGPVLVFEKILFKFC. Residues 583–595 lie on the Extracellular side of the membrane; sequence KEYGLSYLSLRAS. A helical membrane pass occupies residues 596–616; it reads IGLWTATLCIILVATDASSLV. The Cytoplasmic segment spans residues 617–625; it reads CYITRFTEE. The helical transmembrane segment at 626-646 threads the bilayer; sequence AFASLICIIFIYEALEKLFEL. At 647–719 the chain is on the extracellular side; it reads SEAYPINMHN…VGRACGHEHP (73 aa). 4 N-linked (GlcNAc...) asparagine glycosylation sites follow: Asn-673, Asn-676, Asn-686, and Asn-696. Residues 720 to 740 form a helical membrane-spanning segment; the sequence is YVPDVLFWSVILFFSTVTLSA. Residues 741-761 are Cytoplasmic-facing; it reads TLKQFKTSRYFPTKVRSIVSD. The chain crosses the membrane as a helical span at residues 762-782; it reads FAVFLTILCMVLIDYAIGIPS. The Extracellular segment spans residues 783-808; that stretch reads PKLQVPSVFKPTRDDRGWFVTPLGPN. A helical membrane pass occupies residues 809 to 829; it reads PWWTVIAAIIPALLCTILIFM. The Cytoplasmic portion of the chain corresponds to 830 to 854; sequence DQQITAVIINRKEHKLKKGCGYHLD. Residues 855–875 traverse the membrane as a helical segment; sequence LLMVAVMLGVCSIMGLPWFVA. The Extracellular portion of the chain corresponds to 876 to 911; sequence ATVLSITHVNSLKLESECSAPGEQPKFLGIREQRVT. A helical transmembrane segment spans residues 912 to 932; the sequence is GLMIFILMGSSVFMTSILKFI. Residues 933-934 lie on the Cytoplasmic side of the membrane; that stretch reads PM. A helical transmembrane segment spans residues 935–955; sequence PVLYGVFLYMGASSLKGIQFF. Residues 956-997 are Extracellular-facing; the sequence is DRIKLFWMPAKHQPDFIYLRHVPLRKVHLFTVIQMSCLGLLW. Residues 998–1018 traverse the membrane as a helical segment; it reads IIKVSRAAIVFPMMVLALVFV. Over 1019–1117 the chain is Cytoplasmic; it reads RKLMDFLFTK…SSFPSKSSPS (99 aa). 2 positions are modified to phosphoserine: Ser-1056 and Ser-1084.

The protein belongs to the anion exchanger (TC 2.A.31) family. In terms of processing, N-glycosylated.

The protein resides in the basolateral cell membrane. It localises to the apical cell membrane. Its subcellular location is the cell projection. The protein localises to the dendrite. It is found in the axon. The protein resides in the perikaryon. It localises to the presynapse. Its subcellular location is the postsynapse. Functionally, sodium/bicarbonate cotransporter which plays an important role in regulating intracellular pH. Has been shown to act as a sodium/bicarbonate cotransporter in exchange for intracellular chloride. Has also been shown to act as a sodium/biocarbonate cotransporter which does not couple net influx of bicarbonate to net efflux of chloride, with the observed chloride efflux being due to chloride self-exchange. Controls neuronal pH and may contribute to the secretion of cerebrospinal fluid. Acting on presynaptic intracellular pH, it promotes GABA release, reduces the excitability of CA1 pyramidal neurons, and modulates short-term synaptic plasticity. Required in retinal cells to maintain normal pH which is necessary for normal vision. In the kidney, likely to mediate bicarbonate reclamation in the apical membrane of the proximal tubules. This Bos taurus (Bovine) protein is Sodium-driven chloride bicarbonate exchanger.